A 311-amino-acid polypeptide reads, in one-letter code: tRNA-cytidine(32) 2-sulfurtransferase (311 aa).

Residues 47-52 (SGGKDS) carry the PP-loop motif motif. The [4Fe-4S] cluster site is built by cysteine 122, cysteine 125, and cysteine 213.

This sequence belongs to the TtcA family. In terms of assembly, homodimer. It depends on Mg(2+) as a cofactor. Requires [4Fe-4S] cluster as cofactor.

The protein localises to the cytoplasm. It carries out the reaction cytidine(32) in tRNA + S-sulfanyl-L-cysteinyl-[cysteine desulfurase] + AH2 + ATP = 2-thiocytidine(32) in tRNA + L-cysteinyl-[cysteine desulfurase] + A + AMP + diphosphate + H(+). The protein operates within tRNA modification. Functionally, catalyzes the ATP-dependent 2-thiolation of cytidine in position 32 of tRNA, to form 2-thiocytidine (s(2)C32). The sulfur atoms are provided by the cysteine/cysteine desulfurase (IscS) system. The polypeptide is tRNA-cytidine(32) 2-sulfurtransferase (Escherichia coli O127:H6 (strain E2348/69 / EPEC)).